We begin with the raw amino-acid sequence, 545 residues long: Chaperonin GroEL (545 aa).

Residues 29 to 32 (TLGP), 86 to 90 (DGTTT), Gly413, 476 to 478 (NAA), and Asp492 contribute to the ATP site.

It belongs to the chaperonin (HSP60) family. Forms a cylinder of 14 subunits composed of two heptameric rings stacked back-to-back. Interacts with the co-chaperonin GroES.

It localises to the cytoplasm. The enzyme catalyses ATP + H2O + a folded polypeptide = ADP + phosphate + an unfolded polypeptide.. Its function is as follows. Together with its co-chaperonin GroES, plays an essential role in assisting protein folding. The GroEL-GroES system forms a nano-cage that allows encapsulation of the non-native substrate proteins and provides a physical environment optimized to promote and accelerate protein folding. The sequence is that of Chaperonin GroEL from Shouchella clausii (strain KSM-K16) (Alkalihalobacillus clausii).